Here is an 87-residue protein sequence, read N- to C-terminus: Neurotoxin Cex1 (87 aa).

Residues Met-1–Ala-19 form the signal peptide. The LCN-type CS-alpha/beta domain occupies Lys-20–Gly-85. Intrachain disulfides connect Cys-31/Cys-84, Cys-35/Cys-60, Cys-44/Cys-65, and Cys-48/Cys-67. Cys-84 carries the post-translational modification Cysteine amide. Positions Gly-85 to Lys-87 are excised as a propeptide.

The protein belongs to the long (4 C-C) scorpion toxin superfamily. Sodium channel inhibitor family. Beta subfamily. Expressed by the venom gland.

It is found in the secreted. Its function is as follows. Beta toxins bind voltage-independently at site-4 of sodium channels (Nav) and shift the voltage of activation toward more negative potentials thereby affecting sodium channel activation and promoting spontaneous and repetitive firing. In Centruroides exilicauda (Bark scorpion), this protein is Neurotoxin Cex1.